The chain runs to 566 residues: Arginine--tRNA ligase (566 aa).

The 'HIGH' region signature appears at 123–133 (PNIAKPFHIGH).

This sequence belongs to the class-I aminoacyl-tRNA synthetase family. Monomer.

It localises to the cytoplasm. The catalysed reaction is tRNA(Arg) + L-arginine + ATP = L-arginyl-tRNA(Arg) + AMP + diphosphate. The sequence is that of Arginine--tRNA ligase from Clostridioides difficile (strain 630) (Peptoclostridium difficile).